The chain runs to 141 residues: Large ribosomal subunit protein uL11 (141 aa).

It belongs to the universal ribosomal protein uL11 family. Part of the ribosomal stalk of the 50S ribosomal subunit. Interacts with L10 and the large rRNA to form the base of the stalk. L10 forms an elongated spine to which L12 dimers bind in a sequential fashion forming a multimeric L10(L12)X complex. One or more lysine residues are methylated.

Its function is as follows. Forms part of the ribosomal stalk which helps the ribosome interact with GTP-bound translation factors. The protein is Large ribosomal subunit protein uL11 of Chlamydia felis (strain Fe/C-56) (Chlamydophila felis).